Consider the following 926-residue polypeptide: BTB/POZ domain-containing protein KCTD19 (926 aa).

Residues 18–72 (NVGGWHFSVPRSKLSQFPDSLLWKEASALTSSESQRLFIDRDGSTFRHVHYYLYT) form the BTB 1 domain. A Phosphoserine modification is found at Ser270. Positions 398–485 (IKVYVGSHWY…YHIPSLSEAL (88 aa)) constitute a BTB 2 domain. The segment at 673 to 751 (GSEAASQPST…PAPEQPLPEA (79 aa)) is disordered. Residues 730–742 (DWSKQRTKERESP) show a composition bias toward basic and acidic residues.

As to quaternary structure, identified in a complex with ZNF541, HDAC1 and HSPA2. Identified in a complex with ZNF541 and HDAC1. Identified in a complex with HDAC1, HDAC2, DNTTIP1 and ZNF541.

The protein localises to the nucleus. Transcription regulator which is essential for male fertility and for the completion of meiotic prophase in spermatocytes. Regulates progression of the pachytene stage of meiotic prophase and promotes the transcriptional activation activity ZNF541. Required for the organization of chromosomes during metaphase I. The sequence is that of BTB/POZ domain-containing protein KCTD19 (KCTD19) from Homo sapiens (Human).